We begin with the raw amino-acid sequence, 931 residues long: MRHSIGLAAALLAPTLPVALGQYIRDLSTEKWTLSSRALNRTVPAQFPSQVHLDLLRAGVIGEYHGLNDFNLRWIAAANWTYTSQPIKGLLDNYDSTWLVFDGLDTFATISFCGQQIASTDNQFRQYAFDVSTALGSCKGDPVLSINFGSAPNIVDAIAQDSNSQKWPDDVQLTYEYPNRWFMRKEQSDFGWDWGPAFAPAGPWKPAYIVQLDKKESVYVLNTDLDIYRKGQINYLPPDQSQPWVVNASIDILGPLPTKPTMSIEVRDTHSGTILTSRTLNNVSVAGNAITGVTVLDGLTPKLWWPQGLGDQNLYNVSITVQSRGNQTVASVNKRTGFRTIFLNQRNITEAQRAQGIAPGANWHFEVNGHEFYAKGSNLIPPDSFWTRVTEEKMSRLFDAVVVGNQNMLRVWSSGAYLHDYIYDLADEKGILLWSEFEFSDALYPSDDAFLENVAAEIVYNVRRVNHHPSLALWAGGNEIESLMLPRVKDAAPSSYSYYVGEYEKMYISLFLPLVYENTRSISYSPSSTTEGYLYIDLSAPVPMAERYDNTTSGSYYGDTDHYDYDTSVAFDYGSYPVGRFANEFGFHSMPSLQTWQQAVDTEDLYFNSSVVMLRNHHDPAGGLMTDNYANSATGMGEMTMGVVSYYPIPSKSDHISNFSAWCHATQLFQADMYKSQIQFYRRGSGMPERQLGSLYWQLEDIWQAPSWAGIEYGGRWKVLHHVMRDIYQPVIVSPFWNYTTGSLDVYVTSDLWSPAAGTVDLTWLDLSGRPIAGNAGTPKSVPFTVGGLNSTRIYGTNVSSLGLPDTKDAVLILSLSAHGRLPNSDRTTNLTHENYATLSWPKDLKIVDPGLKIGHSSKKTTVTVEATSGVSLYTWLDYPEGVVGYFEENAFVLAPGEKKEISFTVLEDTTDGAWVRNITVQSLWDQKVRG.

The signal sequence occupies residues 1 to 21 (MRHSIGLAAALLAPTLPVALG). N-linked (GlcNAc...) asparagine glycosylation is found at Asn40, Asn79, Asn247, Asn282, Asn316, Asn326, and Asn347. Glu479 acts as the Proton donor in catalysis. 8 N-linked (GlcNAc...) asparagine glycosylation sites follow: Asn550, Asn608, Asn658, Asn738, Asn790, Asn798, Asn830, and Asn918.

This sequence belongs to the glycosyl hydrolase 2 family. Beta-mannosidase A subfamily. In terms of assembly, homodimer.

It is found in the secreted. It catalyses the reaction Hydrolysis of terminal, non-reducing beta-D-mannose residues in beta-D-mannosides.. It functions in the pathway glycan metabolism; N-glycan degradation. In terms of biological role, exoglycosidase that cleaves the single beta-linked mannose residue from the non-reducing end of beta-mannosidic oligosaccharides of various complexity and length. Involved in the degradation of polymeric mannan and galactomannan. The sequence is that of Beta-mannosidase A (mndA) from Aspergillus niger (strain ATCC MYA-4892 / CBS 513.88 / FGSC A1513).